We begin with the raw amino-acid sequence, 151 residues long: Small ribosomal subunit protein uS11 (151 aa).

Residues 130–151 are disordered; it reads EDVTPIPSDSTRRKGGRRGRRL. A compositionally biased stretch (basic residues) spans 142 to 151; that stretch reads RKGGRRGRRL.

It belongs to the universal ribosomal protein uS11 family.

The protein is Small ribosomal subunit protein uS11 of Aedes aegypti (Yellowfever mosquito).